Consider the following 513-residue polypeptide: GMP synthase [glutamine-hydrolyzing] (513 aa).

Positions glutamine 5 to aspartate 196 constitute a Glutamine amidotransferase type-1 domain. The active-site Nucleophile is the cysteine 83. Catalysis depends on residues histidine 170 and glutamate 172. In terms of domain architecture, GMPS ATP-PPase spans tryptophan 197–arginine 388. Serine 224–serine 230 contacts ATP.

Homodimer.

The catalysed reaction is XMP + L-glutamine + ATP + H2O = GMP + L-glutamate + AMP + diphosphate + 2 H(+). Its pathway is purine metabolism; GMP biosynthesis; GMP from XMP (L-Gln route): step 1/1. In terms of biological role, catalyzes the synthesis of GMP from XMP. The protein is GMP synthase [glutamine-hydrolyzing] of Mesoplasma florum (strain ATCC 33453 / NBRC 100688 / NCTC 11704 / L1) (Acholeplasma florum).